We begin with the raw amino-acid sequence, 938 residues long: Isoleucine--tRNA ligase (938 aa).

The 'HIGH' region motif lies at 58–68; that stretch reads PYANGSIHIGH. K183 carries the post-translational modification N6-acetyllysine. An L-isoleucyl-5'-AMP-binding site is contributed by E561. The short motif at 602 to 606 is the 'KMSKS' region element; it reads KMSKS. K605 is an ATP binding site. 4 residues coordinate Zn(2+): C901, C904, C921, and C924.

Belongs to the class-I aminoacyl-tRNA synthetase family. IleS type 1 subfamily. Monomer. Requires Zn(2+) as cofactor.

It localises to the cytoplasm. It carries out the reaction tRNA(Ile) + L-isoleucine + ATP = L-isoleucyl-tRNA(Ile) + AMP + diphosphate. Functionally, catalyzes the attachment of isoleucine to tRNA(Ile). As IleRS can inadvertently accommodate and process structurally similar amino acids such as valine, to avoid such errors it has two additional distinct tRNA(Ile)-dependent editing activities. One activity is designated as 'pretransfer' editing and involves the hydrolysis of activated Val-AMP. The other activity is designated 'posttransfer' editing and involves deacylation of mischarged Val-tRNA(Ile). This Escherichia fergusonii (strain ATCC 35469 / DSM 13698 / CCUG 18766 / IAM 14443 / JCM 21226 / LMG 7866 / NBRC 102419 / NCTC 12128 / CDC 0568-73) protein is Isoleucine--tRNA ligase.